Consider the following 657-residue polypeptide: Conserved oligomeric Golgi complex subunit 6 (657 aa).

Belongs to the COG6 family. As to quaternary structure, component of the conserved oligomeric Golgi complex which is composed of eight different subunits and is required for normal Golgi morphology and localization.

It localises to the golgi apparatus membrane. Its function is as follows. Required for normal Golgi function. The polypeptide is Conserved oligomeric Golgi complex subunit 6 (COG6) (Bos taurus (Bovine)).